The following is a 533-amino-acid chain: Tyrosine decarboxylase (533 aa).

Residues 1–22 (MAPPSHCHTINGGAPRNGAIPE) are disordered. Pyridoxal 5'-phosphate is bound by residues Thr-281 and Asn-336. The residue at position 339 (Lys-339) is an N6-(pyridoxal phosphate)lysine.

It belongs to the group II decarboxylase family. It depends on pyridoxal 5'-phosphate as a cofactor.

It carries out the reaction L-tyrosine + H(+) = tyramine + CO2. In terms of biological role, catalyzes the decarboxylation of L-tyrosine to tyramine, which can be converted to the hydroxycinnamic acid amides feruloyltyramine and 4-coumaroyltyramine. Possesses low tryptophan decarboxylase activity. This Oryza sativa subsp. japonica (Rice) protein is Tyrosine decarboxylase.